The primary structure comprises 404 residues: Probable thioredoxin reductase ARB_06224 (404 aa).

The first 22 residues, 1-22 (MGVQRLALALIAFTSALTSVIA), serve as a signal peptide directing secretion. 67 to 75 (DEGIYRNGA) provides a ligand contact to FAD. An intrachain disulfide couples C172 to C175. The N-linked (GlcNAc...) asparagine glycan is linked to N213. 334 to 343 (DANNDGSTNG) provides a ligand contact to FAD.

It belongs to the class-II pyridine nucleotide-disulfide oxidoreductase family. As to quaternary structure, homodimer. The cofactor is FAD.

It is found in the secreted. It carries out the reaction [thioredoxin]-dithiol + NADP(+) = [thioredoxin]-disulfide + NADPH + H(+). The sequence is that of Probable thioredoxin reductase ARB_06224 from Arthroderma benhamiae (strain ATCC MYA-4681 / CBS 112371) (Trichophyton mentagrophytes).